The sequence spans 1415 residues: DNA-directed RNA polymerase subunit beta' (1415 aa).

C71, C73, C86, and C89 together coordinate Zn(2+). Mg(2+) is bound by residues D461, D463, and D465. Zn(2+)-binding residues include C815, C889, C896, and C899.

Belongs to the RNA polymerase beta' chain family. As to quaternary structure, the RNAP catalytic core consists of 2 alpha, 1 beta, 1 beta' and 1 omega subunit. When a sigma factor is associated with the core the holoenzyme is formed, which can initiate transcription. Mg(2+) is required as a cofactor. It depends on Zn(2+) as a cofactor.

It carries out the reaction RNA(n) + a ribonucleoside 5'-triphosphate = RNA(n+1) + diphosphate. In terms of biological role, DNA-dependent RNA polymerase catalyzes the transcription of DNA into RNA using the four ribonucleoside triphosphates as substrates. The protein is DNA-directed RNA polymerase subunit beta' of Haemophilus influenzae (strain ATCC 51907 / DSM 11121 / KW20 / Rd).